The chain runs to 350 residues: Small ribosomal subunit biogenesis GTPase RsgA (350 aa).

Polar residues predominate over residues 1 to 17 (MSKNKLSKGQQRRVNAN). Positions 1–27 (MSKNKLSKGQQRRVNANHQRRLKTSAE) are disordered. Residues 104–273 (TSVLTRPDFY…VIDSPGVREF (170 aa)) form the CP-type G domain. GTP-binding positions include 160–163 (NKID) and 214–222 (GQSGVGKSS). Positions 297, 302, 304, and 310 each coordinate Zn(2+).

This sequence belongs to the TRAFAC class YlqF/YawG GTPase family. RsgA subfamily. As to quaternary structure, monomer. Associates with 30S ribosomal subunit, binds 16S rRNA. It depends on Zn(2+) as a cofactor.

Its subcellular location is the cytoplasm. In terms of biological role, one of several proteins that assist in the late maturation steps of the functional core of the 30S ribosomal subunit. Helps release RbfA from mature subunits. May play a role in the assembly of ribosomal proteins into the subunit. Circularly permuted GTPase that catalyzes slow GTP hydrolysis, GTPase activity is stimulated by the 30S ribosomal subunit. This is Small ribosomal subunit biogenesis GTPase RsgA from Salmonella agona (strain SL483).